The chain runs to 398 residues: T-box transcription factor TBX1 (398 aa).

The disordered stretch occupies residues 23–72 (AAGGFPGAASPGADPYGPREPPPPPPRYDPCAAAAPGAPGPPPPPHAYPF). Residues 29–38 (GAASPGADPY) show a composition bias toward low complexity. 2 stretches are compositionally biased toward pro residues: residues 40–50 (PREPPPPPPRY) and 60–69 (APGPPPPPHA). A DNA-binding region (T-box) is located at residues 119–297 (LWDEFNQLGT…SNPFAKGFRD (179 aa)).

As to quaternary structure, binds DNA as a dimer. Interacts with DSCR6. Interacts with NKX2-5.

The protein resides in the nucleus. In terms of biological role, transcription factor that plays a key role in cardiovascular development by promoting pharyngeal arch segmentation during embryonic development. Also involved in craniofacial muscle development. Together with NKX2-5, acts as a regulator of asymmetric cardiac morphogenesis by promoting expression of PITX2. Acts upstream of TBX1 for the formation of the thymus and parathyroid glands from the third pharyngeal pouch. Required for hair follicle stem cell self-renewal. Binds to the palindromic T site 5'-TTCACACCTAGGTGTGAA-3' DNA sequence. This is T-box transcription factor TBX1 from Homo sapiens (Human).